A 338-amino-acid polypeptide reads, in one-letter code: 2-methyl-6-phytyl-1,4-hydroquinone methyltransferase, chloroplastic (338 aa).

The transit peptide at 1–51 directs the protein to the chloroplast; sequence MASLMLNGAITFPKGLGSPGSNLHARSIPRPTLLSVTRTSTPRLSVATRCS. Over 52 to 307 the chain is Chloroplast intermembrane; sequence SSSVSSSRPS…VNNPFSFLGR (256 aa). The SAM motif I stretch occupies residues 114 to 123; the sequence is VVDVGGGTGF. Residues 159-172 form an SAM motif II region; the sequence is CKIVEGDAEDLPFP. Positions 200–213 are SAM motif III; that stretch reads RVLKIGGKACLIGP. Residues 308–328 form a helical membrane-spanning segment; it reads FLLGTLAAAWFVLIPIYMWIK. The Stromal portion of the chain corresponds to 329 to 338; that stretch reads DQIVPKDQPI.

The protein belongs to the class I-like SAM-binding methyltransferase superfamily. MPBQ/MBSQ MT family.

It is found in the plastid. The protein localises to the chloroplast inner membrane. It carries out the reaction 2-methyl-6-phytyl-1,4-benzene-1,4-diol + S-adenosyl-L-methionine = 2,3-dimethyl-6-phytylbenzene-1,4-diol + S-adenosyl-L-homocysteine + H(+). The enzyme catalyses 2-methyl-6-(all-trans-nonaprenyl)benzene-1,4-diol + S-adenosyl-L-methionine = plastoquinol-9 + S-adenosyl-L-homocysteine + H(+). It catalyses the reaction 6-geranylgeranyl-2-methylbenzene-1,4-diol + S-adenosyl-L-methionine = 6-geranylgeranyl-2,3-dimethylbenzene-1,4-diol + S-adenosyl-L-homocysteine + H(+). It functions in the pathway cofactor biosynthesis; tocopherol biosynthesis. In terms of biological role, involved in a key methylation step in both tocopherols (vitamin E) and plastoquinone synthesis. Catalyzes the conversion of 2-methyl-6-phytyl-1,4-hydroquinone (MPBQ) to 2,3-dimethyl-6-phytyl-1,4-hydroquinone (DMPQ, a substrate for tocopherol cyclase), and 2-methyl-6-solanyl-1,4-benzoquinone (MSBQ) to plastoquinone. In Arabidopsis thaliana (Mouse-ear cress), this protein is 2-methyl-6-phytyl-1,4-hydroquinone methyltransferase, chloroplastic (VTE3).